Here is a 446-residue protein sequence, read N- to C-terminus: Phosphoglucosamine mutase (446 aa).

S101 functions as the Phosphoserine intermediate in the catalytic mechanism. The Mg(2+) site is built by S101, D240, D242, and D244. S101 carries the post-translational modification Phosphoserine.

The protein belongs to the phosphohexose mutase family. Mg(2+) serves as cofactor. Activated by phosphorylation.

It catalyses the reaction alpha-D-glucosamine 1-phosphate = D-glucosamine 6-phosphate. In terms of biological role, catalyzes the conversion of glucosamine-6-phosphate to glucosamine-1-phosphate. The polypeptide is Phosphoglucosamine mutase (Coxiella burnetii (strain RSA 331 / Henzerling II)).